The primary structure comprises 196 residues: ATP-dependent Clp protease proteolytic subunit (196 aa).

Catalysis depends on S101, which acts as the Nucleophile. Residue H126 is part of the active site.

The protein belongs to the peptidase S14 family. Component of the chloroplastic Clp protease core complex.

It is found in the plastid. It localises to the chloroplast stroma. The enzyme catalyses Hydrolysis of proteins to small peptides in the presence of ATP and magnesium. alpha-casein is the usual test substrate. In the absence of ATP, only oligopeptides shorter than five residues are hydrolyzed (such as succinyl-Leu-Tyr-|-NHMec, and Leu-Tyr-Leu-|-Tyr-Trp, in which cleavage of the -Tyr-|-Leu- and -Tyr-|-Trp bonds also occurs).. Cleaves peptides in various proteins in a process that requires ATP hydrolysis. Has a chymotrypsin-like activity. Plays a major role in the degradation of misfolded proteins. The chain is ATP-dependent Clp protease proteolytic subunit from Lepidium virginicum (Virginia pepperweed).